We begin with the raw amino-acid sequence, 1441 residues long: Gag-Pol polyprotein (1441 aa).

Gly-2 is lipidated: N-myristoyl glycine; by host. The short motif at 16-22 (FEKIRLK) is the Nuclear export signal element. The Nuclear localization signal signature appears at 26-32 (KKCYRLK). Residues 204–226 (THPQQQPAQPGGGLRTPSGSDIA) are disordered. 2 consecutive CCHC-type zinc fingers follow at residues 386–403 (PICFNCNKEGHVARFFKA) and 407–424 (KGCWNCGAMDHQKAQCPK). Positions 444–466 (TGELSGTRGDSNSSTIRGETSAE) are enriched in polar residues. The disordered stretch occupies residues 444-494 (TGELSGTRGDSNSSTIRGETSAENSEHLSEIRERAQAEDEGGEERGGFSFP). Residues 467–480 (NSEHLSEIRERAQA) show a composition bias toward basic and acidic residues. One can recognise a Peptidase A2 domain in the interval 513 to 584 (IRALLDTGAD…TPIDIIGRNI (72 aa)). Asp-518 functions as the For protease activity; shared with dimeric partner in the catalytic mechanism. Positions 640 to 830 (EGKISRVDPG…PPFHWMGYEL (191 aa)) constitute a Reverse transcriptase domain. Residues Asp-706, Asp-781, and Asp-782 each coordinate Mg(2+). Positions 823–831 (FHWMGYELH) are RT 'primer grip'. The short motif at 994–1010 (WEDWWHEYWQCTWIPEV) is the Tryptophan repeat motif element. The region spanning 1030–1153 (LEGVETYYVD…IDKLVSSGIR (124 aa)) is the RNase H type-1 domain. Mg(2+)-binding residues include Asp-1039, Glu-1074, Asp-1094, and Asp-1145. An Integrase-type zinc finger spans residues 1159 to 1200 (QNIEPAQEEHEKYHSNEAQLREKFHLPALVAKQIVQSCSKCC). Zn(2+)-binding residues include His-1168, His-1172, Cys-1196, and Cys-1199. The Integrase catalytic domain occupies 1210–1360 (TDASLGVWQI…TAGERIVNMI (151 aa)). Asp-1220 and Asp-1272 together coordinate Mg(2+). The integrase-type DNA-binding region spans 1379 to 1426 (FKVYFREGRDQLWKGPGILLWKGEGAVVLKYQEEIKIVPRRKCKIIKD).

In terms of assembly, homotrimer. Interacts with gp41 (via C-terminus). Homodimer. The active site consists of two apposed aspartic acid residues. As to quaternary structure, heterodimer of p66 RT and p51 RT (RT p66/p51). Heterodimerization of RT is essential for DNA polymerase activity. Despite the sequence identities, p66 RT and p51 RT have distinct folding. In terms of assembly, homotetramer; may further associate as a homohexadecamer. Mg(2+) is required as a cofactor. In terms of processing, specific enzymatic cleavages by the viral protease yield mature proteins. The protease is released by autocatalytic cleavage. The polyprotein is cleaved during and after budding, this process is termed maturation. Proteolytic cleavage of p66 RT removes the RNase H domain to yield the p51 RT subunit. Capsid protein p24 is phosphorylated.

It localises to the virion. The protein resides in the host nucleus. It is found in the host cytoplasm. Its subcellular location is the host cell membrane. The catalysed reaction is Specific for a P1 residue that is hydrophobic, and P1' variable, but often Pro.. It catalyses the reaction Endohydrolysis of RNA in RNA/DNA hybrids. Three different cleavage modes: 1. sequence-specific internal cleavage of RNA. Human immunodeficiency virus type 1 and Moloney murine leukemia virus enzymes prefer to cleave the RNA strand one nucleotide away from the RNA-DNA junction. 2. RNA 5'-end directed cleavage 13-19 nucleotides from the RNA end. 3. DNA 3'-end directed cleavage 15-20 nucleotides away from the primer terminus.. The enzyme catalyses 3'-end directed exonucleolytic cleavage of viral RNA-DNA hybrid.. It carries out the reaction DNA(n) + a 2'-deoxyribonucleoside 5'-triphosphate = DNA(n+1) + diphosphate. Its activity is regulated as follows. The viral protease is inhibited by many synthetic protease inhibitors (PIs), such as amprenavir, atazanavir, indinavir, loprinavir, nelfinavir, ritonavir and saquinavir. RT can be inhibited either by nucleoside RT inhibitors (NRTIs) or by non nucleoside RT inhibitors (NNRTIs). NRTIs act as chain terminators, whereas NNRTIs inhibit DNA polymerization by binding a small hydrophobic pocket near the RT active site and inducing an allosteric change in this region. Classical NRTIs are abacavir, adefovir (PMEA), didanosine (ddI), lamivudine (3TC), stavudine (d4T), tenofovir (PMPA), zalcitabine (ddC), and zidovudine (AZT). Classical NNRTIs are atevirdine (BHAP U-87201E), delavirdine, efavirenz (DMP-266), emivirine (I-EBU), and nevirapine (BI-RG-587). The tritherapies used as a basic effective treatment of AIDS associate two NRTIs and one NNRTI. Use of protease inhibitors in tritherapy regimens permit more ambitious therapeutic strategies. Functionally, gag-Pol polyprotein and Gag polyprotein may regulate their own translation, by the binding genomic RNA in the 5'-UTR. At low concentration, Gag-Pol and Gag would promote translation, whereas at high concentration, the polyproteins encapsidate genomic RNA and then shut off translation. Matrix protein p17 has two main functions: in infected cell, it targets Gag and Gag-pol polyproteins to the plasma membrane via a multipartite membrane-binding signal, that includes its myristointegration complex. The myristoylation signal and the NLS exert conflicting influences its subcellular localization. The key regulation of these motifs might be phosphorylation of a portion of MA molecules on the C-terminal tyrosine at the time of virus maturation, by virion-associated cellular tyrosine kinase. Implicated in the release from host cell mediated by Vpu. In terms of biological role, capsid protein p24 forms the conical core that encapsulates the genomic RNA-nucleocapsid complex in the virion. The core is constituted by capsid protein hexamer subunits. The core is disassembled soon after virion entry. Interaction with host PPIA/CYPA protects the virus from restriction by host TRIM5-alpha and from an unknown antiviral activity in host cells. This capsid restriction by TRIM5 is one of the factors which restricts SIV to the simian species. Its function is as follows. Nucleocapsid protein p7 encapsulates and protects viral dimeric unspliced (genomic) RNA. Binds these RNAs through its zinc fingers. Facilitates rearangement of nucleic acid secondary structure during retrotranscription of genomic RNA. This capability is referred to as nucleic acid chaperone activity. Functionally, the aspartyl protease mediates proteolytic cleavages of Gag and Gag-Pol polyproteins during or shortly after the release of the virion from the plasma membrane. Cleavages take place as an ordered, step-wise cascade to yield mature proteins. This process is called maturation. Displays maximal activity during the budding process just prior to particle release from the cell. Also cleaves Nef and Vif, probably concomitantly with viral structural proteins on maturation of virus particles. Hydrolyzes host EIF4GI and PABP1 in order to shut off the capped cellular mRNA translation. The resulting inhibition of cellular protein synthesis serves to ensure maximal viral gene expression and to evade host immune response. Reverse transcriptase/ribonuclease H (RT) is a multifunctional enzyme that converts the viral dimeric RNA genome into dsDNA in the cytoplasm, shortly after virus entry into the cell. This enzyme displays a DNA polymerase activity that can copy either DNA or RNA templates, and a ribonuclease H (RNase H) activity that cleaves the RNA strand of RNA-DNA heteroduplexes in a partially processive 3' to 5' endonucleasic mode. Conversion of viral genomic RNA into dsDNA requires many steps. A tRNA binds to the primer-binding site (PBS) situated at the 5'-end of the viral RNA. RT uses the 3' end of the tRNA primer to perform a short round of RNA-dependent minus-strand DNA synthesis. The reading proceeds through the U5 region and ends after the repeated (R) region which is present at both ends of viral RNA. The portion of the RNA-DNA heteroduplex is digested by the RNase H, resulting in a ssDNA product attached to the tRNA primer. This ssDNA/tRNA hybridizes with the identical R region situated at the 3' end of viral RNA. This template exchange, known as minus-strand DNA strong stop transfer, can be either intra- or intermolecular. RT uses the 3' end of this newly synthesized short ssDNA to perform the RNA-dependent minus-strand DNA synthesis of the whole template. RNase H digests the RNA template except for two polypurine tracts (PPTs) situated at the 5'-end and near the center of the genome. It is not clear if both polymerase and RNase H activities are simultaneous. RNase H can probably proceed both in a polymerase-dependent (RNA cut into small fragments by the same RT performing DNA synthesis) and a polymerase-independent mode (cleavage of remaining RNA fragments by free RTs). Secondly, RT performs DNA-directed plus-strand DNA synthesis using the PPTs that have not been removed by RNase H as primers. PPTs and tRNA primers are then removed by RNase H. The 3' and 5' ssDNA PBS regions hybridize to form a circular dsDNA intermediate. Strand displacement synthesis by RT to the PBS and PPT ends produces a blunt ended, linear dsDNA copy of the viral genome that includes long terminal repeats (LTRs) at both ends. In terms of biological role, integrase catalyzes viral DNA integration into the host chromosome, by performing a series of DNA cutting and joining reactions. This enzyme activity takes place after virion entry into a cell and reverse transcription of the RNA genome in dsDNA. The first step in the integration process is 3' processing. This step requires a complex comprising the viral genome, matrix protein, Vpr and integrase. This complex is called the pre-integration complex (PIC). The integrase protein removes 2 nucleotides from each 3' end of the viral DNA, leaving recessed CA OH's at the 3' ends. In the second step, the PIC enters cell nucleus. This process is mediated through integrase and Vpr proteins, and allows the virus to infect a non dividing cell. This ability to enter the nucleus is specific of lentiviruses, other retroviruses cannot and rely on cell division to access cell chromosomes. In the third step, termed strand transfer, the integrase protein joins the previously processed 3' ends to the 5' ends of strands of target cellular DNA at the site of integration. The 5'-ends are produced by integrase-catalyzed staggered cuts, 5 bp apart. A Y-shaped, gapped, recombination intermediate results, with the 5'-ends of the viral DNA strands and the 3' ends of target DNA strands remaining unjoined, flanking a gap of 5 bp. The last step is viral DNA integration into host chromosome. This involves host DNA repair synthesis in which the 5 bp gaps between the unjoined strands are filled in and then ligated. Since this process occurs at both cuts flanking the SIV genome, a 5 bp duplication of host DNA is produced at the ends of SIV integration. Alternatively, Integrase may catalyze the excision of viral DNA just after strand transfer, this is termed disintegration. This chain is Gag-Pol polyprotein (gag-pol), found in Cercopithecidae (Old World monkeys).